A 175-amino-acid chain; its full sequence is Large ribosomal subunit protein uL18 (175 aa).

It belongs to the universal ribosomal protein uL18 family. Part of the 50S ribosomal subunit. Contacts the 5S and 23S rRNAs.

Functionally, this is one of the proteins that bind and probably mediate the attachment of the 5S RNA into the large ribosomal subunit, where it forms part of the central protuberance. This chain is Large ribosomal subunit protein uL18, found in Methanoculleus marisnigri (strain ATCC 35101 / DSM 1498 / JR1).